The following is a 544-amino-acid chain: Sialidase (544 aa).

A signal peptide spans 1-22 (MKKAVILFSLFCFLCAIPVVQA). 3 BNR repeats span residues 239–250 (SRSTDGGKTWEK), 318–329 (AKSTDDGKTWSA), and 378–389 (MYSKDGGKNWKM). Residue glutamate 399 is part of the active site. Position 415 (arginine 415) interacts with substrate. Residues 425–436 (AITKDLGKTWTE) form a BNR 4 repeat. Arginine 479 is a binding site for substrate. Residues 485 to 496 (KISLDGGVTWSP) form a BNR 5 repeat.

Belongs to the glycosyl hydrolase 33 family.

The protein localises to the periplasm. It catalyses the reaction Hydrolysis of alpha-(2-&gt;3)-, alpha-(2-&gt;6)-, alpha-(2-&gt;8)- glycosidic linkages of terminal sialic acid residues in oligosaccharides, glycoproteins, glycolipids, colominic acid and synthetic substrates.. In terms of biological role, sialidases have been suggested to be pathogenic factors in microbial infections. This Bacteroides fragilis (strain YCH46) protein is Sialidase (nanH).